A 206-amino-acid chain; its full sequence is Thymidylate kinase (206 aa).

Position 14-21 (14-21) interacts with ATP; the sequence is GGEGIGKS.

It belongs to the thymidylate kinase family.

The enzyme catalyses dTMP + ATP = dTDP + ADP. Phosphorylation of dTMP to form dTDP in both de novo and salvage pathways of dTTP synthesis. The chain is Thymidylate kinase from Rickettsia bellii (strain OSU 85-389).